Consider the following 549-residue polypeptide: Arginine--tRNA ligase (549 aa).

The 'HIGH' region signature appears at 113-123 (ANPDGPLHIGH).

This sequence belongs to the class-I aminoacyl-tRNA synthetase family.

The protein resides in the cytoplasm. The catalysed reaction is tRNA(Arg) + L-arginine + ATP = L-arginyl-tRNA(Arg) + AMP + diphosphate. The polypeptide is Arginine--tRNA ligase (argS) (Archaeoglobus fulgidus (strain ATCC 49558 / DSM 4304 / JCM 9628 / NBRC 100126 / VC-16)).